Reading from the N-terminus, the 862-residue chain is AP-1 complex subunit gamma-2 (862 aa).

HEAT repeat units follow at residues 1–28 (MNPFSSGTRLSDMIRAIRASKTAAEERA), 29–65 (VVRKECAAIRASINENDQDYRHRDLAKLMFIHMLGYP), 101–136 (EVLMLVTNSLKQDLNHTNQYIVGLALCALGNICSAE), 137–173 (MARDLAPEVERLLQFRDPNIRKKAALCAIRIIRKVPD), 308–345 (GLRVLAINILGKFLSNRDNNIRYVALNMLMRSLTVDSQ), 346–382 (AVQRHRATILECVKDSDASIQKRALELIYLLVNENNV), 384–417 (PLAKELIEYLEVSEQDFKGDLTAKICSIVEKFAP), 418–454 (EKIWYIDQMLKVLSEAGTYVKEDVWHALIVVITNAPD), 458–496 (YTVRALYRALHTSFEQETLVRVAIWCIGEYADLLVNNAG), 507–545 (TESDAVDVVENAIKHHLSDVTTKAMALIALLKISSRFPS), and 560–599 (SFVLELQQRSLEFSSVIQKHQNIRSSLVERMPVLDEATFS). Residues 744–859 (AAYPSIVAFE…LEEGQINNFP (116 aa)) form the GAE domain.

Belongs to the adaptor complexes large subunit family. In terms of assembly, adaptor protein complex 1 (AP-1) is a heterotetramer composed of two large adaptins (gamma-type subunit and beta-type subunit), a medium adaptin (mu-type subunit) and a small adaptin (sigma-type subunit).

The protein resides in the golgi apparatus. Its subcellular location is the cytoplasmic vesicle. It is found in the clathrin-coated vesicle membrane. Its function is as follows. Subunit of clathrin-associated adaptor protein complex 1 that plays a role in protein sorting at the trans-Golgi network and early endosomes (TGN/EE). The AP complexes mediate both the recruitment of clathrin to membranes and the recognition of sorting signals within the cytosolic tails of transmembrane cargo molecules. This Arabidopsis thaliana (Mouse-ear cress) protein is AP-1 complex subunit gamma-2.